The chain runs to 143 residues: Putative pre-16S rRNA nuclease (143 aa).

Belongs to the YqgF nuclease family.

It is found in the cytoplasm. Its function is as follows. Could be a nuclease involved in processing of the 5'-end of pre-16S rRNA. The polypeptide is Putative pre-16S rRNA nuclease (Lactobacillus gasseri (strain ATCC 33323 / DSM 20243 / BCRC 14619 / CIP 102991 / JCM 1131 / KCTC 3163 / NCIMB 11718 / NCTC 13722 / AM63)).